The following is an 88-amino-acid chain: Small ribosomal subunit protein uS15 (88 aa).

The protein belongs to the universal ribosomal protein uS15 family. Part of the 30S ribosomal subunit. Forms a bridge to the 50S subunit in the 70S ribosome, contacting the 23S rRNA.

Functionally, one of the primary rRNA binding proteins, it binds directly to 16S rRNA where it helps nucleate assembly of the platform of the 30S subunit by binding and bridging several RNA helices of the 16S rRNA. Its function is as follows. Forms an intersubunit bridge (bridge B4) with the 23S rRNA of the 50S subunit in the ribosome. This chain is Small ribosomal subunit protein uS15, found in Metamycoplasma arthritidis (strain 158L3-1) (Mycoplasma arthritidis).